A 392-amino-acid chain; its full sequence is Cell division protein FtsZ (392 aa).

GTP-binding positions include 24 to 28 (GGGCN), 111 to 113 (GTG), Glu-142, Arg-145, and Asp-189.

Belongs to the FtsZ family. Homodimer. Polymerizes to form a dynamic ring structure in a strictly GTP-dependent manner. Interacts directly with several other division proteins.

It is found in the cytoplasm. Functionally, essential cell division protein that forms a contractile ring structure (Z ring) at the future cell division site. The regulation of the ring assembly controls the timing and the location of cell division. One of the functions of the FtsZ ring is to recruit other cell division proteins to the septum to produce a new cell wall between the dividing cells. Binds GTP and shows GTPase activity. In Neisseria gonorrhoeae, this protein is Cell division protein FtsZ.